The chain runs to 92 residues: Protein EMB-1 (92 aa).

Basic and acidic residues-rich tracts occupy residues 1-16 (MASQ…RARQ), 37-61 (AEGR…EMGR), and 72-92 (GGER…RTKK). Residues 1-92 (MASQQEKKEL…IDESKFRTKK (92 aa)) form a disordered region.

It belongs to the small hydrophilic plant seed protein family. Expressed in embryogenic cells, somatic embryos and seeds at the later stages of development. In the embryos, expressed in the procambium, the root and shoot meristem and the protoderm of the cotyledons. Not detected in the endosperm or the aleurone layer, in young leaves or roots.

The protein localises to the nucleus. The chain is Protein EMB-1 from Daucus carota (Wild carrot).